The sequence spans 997 residues: Translation initiation factor IF-2 (997 aa).

Residues 101–406 (ELAAEQAAAR…SRNQHQDRRH (306 aa)) are disordered. Composition is skewed to low complexity over residues 116-185 (AEAV…QAEP) and 195-209 (AAPA…EPAK). The segment covering 231–242 (TELTSQTPTPVA) has biased composition (polar residues). A compositionally biased stretch (low complexity) spans 256–280 (AEPAAAPKTTAKPGEIRRAAAPAAP). The segment covering 281–292 (DRAREEARRAAE) has biased composition (basic and acidic residues). The segment covering 385–394 (RAGGKGGRGG) has biased composition (gly residues). The tr-type G domain occupies 498–665 (PRAPVVTVMG…NVLLQAEILE (168 aa)). Residues 507-514 (GHVDHGKT) form a G1 region. 507–514 (GHVDHGKT) lines the GTP pocket. The segment at 532 to 536 (GITQH) is G2. The interval 553–556 (DTPG) is G3. Residues 553-557 (DTPGH) and 607-610 (NKID) contribute to the GTP site. A G4 region spans residues 607–610 (NKID). Residues 643–645 (SAK) are G5.

It belongs to the TRAFAC class translation factor GTPase superfamily. Classic translation factor GTPase family. IF-2 subfamily.

The protein resides in the cytoplasm. In terms of biological role, one of the essential components for the initiation of protein synthesis. Protects formylmethionyl-tRNA from spontaneous hydrolysis and promotes its binding to the 30S ribosomal subunits. Also involved in the hydrolysis of GTP during the formation of the 70S ribosomal complex. This is Translation initiation factor IF-2 from Bordetella pertussis (strain Tohama I / ATCC BAA-589 / NCTC 13251).